A 290-amino-acid chain; its full sequence is 6-phospho-5-dehydro-2-deoxy-D-gluconate aldolase (290 aa).

Asp85 serves as the catalytic Proton donor. Zn(2+) is bound by residues His86 and His180. Gly181 contributes to the dihydroxyacetone phosphate binding site. Position 208 (His208) interacts with Zn(2+). Dihydroxyacetone phosphate-binding positions include Gly209–Ser211 and Asn230–Thr233. At Thr233 the chain carries Phosphothreonine.

The protein belongs to the class II fructose-bisphosphate aldolase family. IolJ subfamily. Requires Zn(2+) as cofactor.

The enzyme catalyses 6-phospho-5-dehydro-2-deoxy-D-gluconate = 3-oxopropanoate + dihydroxyacetone phosphate. Its pathway is polyol metabolism; myo-inositol degradation into acetyl-CoA; acetyl-CoA from myo-inositol: step 6/7. Its function is as follows. Produces dihydroxyacetone phosphate (DHAP or glycerone phosphate) and malonic semialdehyde (MSA or 3-oxopropanoate) from 6-phospho-5-dehydro-2-deoxy-D-gluconate (DKGP). In Bacillus subtilis (strain 168), this protein is 6-phospho-5-dehydro-2-deoxy-D-gluconate aldolase (iolJ).